The primary structure comprises 122 residues: Large ribosomal subunit protein uL14 (122 aa).

It belongs to the universal ribosomal protein uL14 family. In terms of assembly, part of the 50S ribosomal subunit. Forms a cluster with proteins L3 and L19. In the 70S ribosome, L14 and L19 interact and together make contacts with the 16S rRNA in bridges B5 and B8.

Its function is as follows. Binds to 23S rRNA. Forms part of two intersubunit bridges in the 70S ribosome. This is Large ribosomal subunit protein uL14 from Rhodococcus jostii (strain RHA1).